Reading from the N-terminus, the 340-residue chain is MTSVLGLLKPLKKAIAAIAVLVLCIGCVQAPTISENPWQEIDLNTDSTFANIAFTDDLQHGWLVGTKETLFETTDGGKTWAERVIDLGDEKESFTGVSFSGQEGWITGRPSILLHTDDGGEHWSRIALSSQLPGAPYNITALGPNTAEMVTDLGAIYKTTDGGKNWKALVEGAVGVARTIERSADGKYVAVSARGNFYSTWSPGDTEWTPHNRNSSRRLQSMGFNGEDKLWLLARGGVVQFSDDTNPDNAEAWSEPVTPQYRNSVGLLHIGYRTPAELWAVGGSGSVVVSKDGGDTWFRDAALEEIPTNFYRVVFLNENKGFILGQQGVILRYDTSTEAA.

An N-terminal signal peptide occupies residues 1–26 (MTSVLGLLKPLKKAIAAIAVLVLCIG). The N-palmitoyl cysteine moiety is linked to residue Cys-27. Cys-27 is lipidated: S-diacylglycerol cysteine.

It belongs to the Ycf48 family. As to quaternary structure, part of early PSII assembly complexes which includes D1 (psbA) and PsbI; not found in mature PSII. Binds to the lumenal side of PSII complexes. Interacts with YidC.

The protein resides in the cellular thylakoid membrane. Functionally, a factor required for optimal assembly of photosystem II (PSII), acting in the early stages of PSII assembly. Also plays a role in replacement of photodamaged D1 (psbA). Assists YidC in synthesis of chlorophyll-binding proteins. This chain is Photosystem II assembly lipoprotein Ycf48, found in Picosynechococcus sp. (strain ATCC 27264 / PCC 7002 / PR-6) (Agmenellum quadruplicatum).